Here is a 226-residue protein sequence, read N- to C-terminus: MMIKQLPENDKPKEKLIAKGAAHLADSELLAILINTGRKGHSSIEVAQDLIKMARSLKELKLLSLNDIMKVKGIGLNKAIILKAAFELGERMYIPDLDTKVKITSPQDAADYFLSRMMHLTHEQFEVLFLNSKNVVIRHEVIFVGTLNSSIVHPREVFKAAIKWSSNAIIVVHNHPSGDVTPSKEDILTTKRLQECGRVLGIELLDHIIIGDAKYLSMVEGGYFDD.

In terms of domain architecture, MPN spans 102-224 (KITSPQDAAD…YLSMVEGGYF (123 aa)). Zn(2+) contacts are provided by His173, His175, and Asp186. The JAMM motif motif lies at 173 to 186 (HNHPSGDVTPSKED).

The protein belongs to the UPF0758 family.

The protein is UPF0758 protein Sca_1264 of Staphylococcus carnosus (strain TM300).